A 518-amino-acid chain; its full sequence is Probable high-affinity hexose transporter ght7 (518 aa).

Over 1–27 the chain is Cytoplasmic; it reads MRDFQSRFADRYNQITNSYSYSSSRQG. The helical transmembrane segment at 28–48 threads the bilayer; that stretch reads LITGMVNVGSFFGCLLSSPVA. The Extracellular segment spans residues 49-54; that stretch reads DKIGKR. A helical membrane pass occupies residues 55–75; that stretch reads LSIIVWTTVYLIGIIIQVTTV. The Cytoplasmic portion of the chain corresponds to 76–77; the sequence is PS. Residues 78–98 traverse the membrane as a helical segment; sequence WVQILVAKIWTGLSIGALSVI. Over 99–112 the chain is Extracellular; sequence TPGYQSEVAPAIMR. Residues 113–133 traverse the membrane as a helical segment; sequence GAIVTTYQLFITLGIFIAACI. At 134–149 the chain is on the cytoplasmic side; sequence NMGTHKYSHGTTAQWR. Residues 150 to 170 traverse the membrane as a helical segment; the sequence is ISIGINLLWGIITLVGIIFLP. Over 171–236 the chain is Extracellular; sequence ESPRYLIAIG…IFNANIRYRT (66 aa). The chain crosses the membrane as a helical span at residues 237–257; it reads FLGMAVMMFQQLTGANYYFYY. At 258 to 271 the chain is on the cytoplasmic side; sequence GTQVFRGTGMDSPY. The chain crosses the membrane as a helical span at residues 272–292; it reads LAALIPDAVNCGCTFGAIFVL. Residues 293–298 are Extracellular-facing; that stretch reads EFFGRR. Residues 299–319 form a helical membrane-spanning segment; it reads SPLIVGGIWQYICFFIYAAVG. At 320–333 the chain is on the cytoplasmic side; it reads DRALYHKNGTSNHR. Residues 334 to 354 traverse the membrane as a helical segment; sequence AGAVMIVFSCLFIFSFSQTWA. Over 355–374 the chain is Extracellular; it reads PAAYVIVGESYPVRYRSKCA. A helical membrane pass occupies residues 375 to 395; the sequence is AVATSANWFWNFLISFFTPFI. The Cytoplasmic portion of the chain corresponds to 396–402; sequence TNSIGFK. A helical transmembrane segment spans residues 403–423; sequence YGYIFASCNLTGAAIIFLFVH. Residues 424 to 518 lie on the Extracellular side of the membrane; the sequence is ETKGRTLEEI…IRPDKREPRL (95 aa). A compositionally biased stretch (polar residues) spans 477–506; it reads IENTDNQGDSGSFQTSTPDDSRPEQNQASA. A disordered region spans residues 477–518; sequence IENTDNQGDSGSFQTSTPDDSRPEQNQASATYIRPDKREPRL.

This sequence belongs to the major facilitator superfamily. Sugar transporter (TC 2.A.1.1) family.

It localises to the membrane. The sequence is that of Probable high-affinity hexose transporter ght7 (ght7) from Schizosaccharomyces pombe (strain 972 / ATCC 24843) (Fission yeast).